Here is a 1318-residue protein sequence, read N- to C-terminus: DNA-directed RNA polymerase subunit beta' (1318 aa).

Positions 221, 295, 302, and 305 each coordinate Zn(2+).

Belongs to the RNA polymerase beta' chain family. RpoC2 subfamily. In cyanobacteria the RNAP catalytic core is composed of 2 alpha, 1 beta, 1 beta', 1 gamma and 1 omega subunit. When a sigma factor is associated with the core the holoenzyme is formed, which can initiate transcription. Requires Zn(2+) as cofactor.

The enzyme catalyses RNA(n) + a ribonucleoside 5'-triphosphate = RNA(n+1) + diphosphate. DNA-dependent RNA polymerase catalyzes the transcription of DNA into RNA using the four ribonucleoside triphosphates as substrates. This chain is DNA-directed RNA polymerase subunit beta', found in Synechococcus elongatus (strain ATCC 33912 / PCC 7942 / FACHB-805) (Anacystis nidulans R2).